Consider the following 270-residue polypeptide: Diaminopimelate epimerase (270 aa).

3 residues coordinate substrate: asparagine 15, glutamine 49, and asparagine 66. The active-site Proton donor is the cysteine 75. Substrate is bound by residues 76–77, asparagine 155, asparagine 187, and 204–205; these read GN and ER. The Proton acceptor role is filled by cysteine 213. 214-215 contributes to the substrate binding site; it reads GS.

This sequence belongs to the diaminopimelate epimerase family. In terms of assembly, homodimer.

It is found in the cytoplasm. It catalyses the reaction (2S,6S)-2,6-diaminopimelate = meso-2,6-diaminopimelate. The protein operates within amino-acid biosynthesis; L-lysine biosynthesis via DAP pathway; DL-2,6-diaminopimelate from LL-2,6-diaminopimelate: step 1/1. In terms of biological role, catalyzes the stereoinversion of LL-2,6-diaminopimelate (L,L-DAP) to meso-diaminopimelate (meso-DAP), a precursor of L-lysine and an essential component of the bacterial peptidoglycan. The chain is Diaminopimelate epimerase from Rickettsia conorii (strain ATCC VR-613 / Malish 7).